The primary structure comprises 239 residues: Large ribosomal subunit protein uL2 (239 aa).

2 disordered regions span residues 1 to 20 (MGKS…FRSP) and 203 to 239 (PFGG…GRRK). The span at 222 to 239 (PPGRKVGHIAARRTGRRK) shows a compositional bias: basic residues.

The protein belongs to the universal ribosomal protein uL2 family. As to quaternary structure, part of the 50S ribosomal subunit. Forms a bridge to the 30S subunit in the 70S ribosome.

One of the primary rRNA binding proteins. Required for association of the 30S and 50S subunits to form the 70S ribosome, for tRNA binding and peptide bond formation. It has been suggested to have peptidyltransferase activity; this is somewhat controversial. Makes several contacts with the 16S rRNA in the 70S ribosome. The polypeptide is Large ribosomal subunit protein uL2 (Pyrococcus horikoshii (strain ATCC 700860 / DSM 12428 / JCM 9974 / NBRC 100139 / OT-3)).